Consider the following 517-residue polypeptide: FERM domain-containing protein 5 (517 aa).

One can recognise an FERM domain in the interval 17–298 (YSCTVRLLDD…ENQAFYKLEK (282 aa)). The tract at residues 308 to 353 (SNLFFKGSRFRYSGRVAKEVMESSAKIKREPPEIHRAGMVPSRSCP) is interaction with ROCK1. A disordered region spans residues 344 to 367 (AGMVPSRSCPSITHGPRLSSVPRT). S375 is subject to Phosphoserine. 2 disordered regions span residues 385-408 (DSAHSTPVRSSSHGDTFLPHVRSS) and 485-517 (GHGGSEQEQRVHLKGPQLQQQQWKGWGKSVPLD). The span at 388–398 (HSTPVRSSSHG) shows a compositional bias: polar residues. The span at 498–517 (KGPQLQQQQWKGWGKSVPLD) shows a compositional bias: low complexity.

As to quaternary structure, interacts with CTNND1, ITGB5 (via cytoplasmic domain) and ROCK1.

Its subcellular location is the cell junction. It is found in the adherens junction. In terms of biological role, may be involved in regulation of cell migration. May regulate cell-matrix interactions via its interaction with ITGB5 and modifying ITGB5 cytoplasmic tail interactions such as with FERMT2 and TLN1. May regulate ROCK1 kinase activity possibly involved in regulation of actin stress fiber formation. This is FERM domain-containing protein 5 (Frmd5) from Mus musculus (Mouse).